The chain runs to 379 residues: 1-deoxy-D-xylulose 5-phosphate reductoisomerase (379 aa).

7 residues coordinate NADPH: Thr-10, Gly-11, Ser-12, Ile-13, Arg-38, Asn-39, and Asn-121. Lys-122 contacts 1-deoxy-D-xylulose 5-phosphate. Glu-123 is an NADPH binding site. Asp-147 contacts Mn(2+). The 1-deoxy-D-xylulose 5-phosphate site is built by Ser-148, Glu-149, Ser-173, and His-196. Glu-149 lines the Mn(2+) pocket. Position 202 (Gly-202) interacts with NADPH. Residues Ser-209, Asn-214, Lys-215, and Glu-218 each contribute to the 1-deoxy-D-xylulose 5-phosphate site. Glu-218 is a binding site for Mn(2+).

The protein belongs to the DXR family. Mg(2+) serves as cofactor. Requires Mn(2+) as cofactor.

It carries out the reaction 2-C-methyl-D-erythritol 4-phosphate + NADP(+) = 1-deoxy-D-xylulose 5-phosphate + NADPH + H(+). The protein operates within isoprenoid biosynthesis; isopentenyl diphosphate biosynthesis via DXP pathway; isopentenyl diphosphate from 1-deoxy-D-xylulose 5-phosphate: step 1/6. Functionally, catalyzes the NADPH-dependent rearrangement and reduction of 1-deoxy-D-xylulose-5-phosphate (DXP) to 2-C-methyl-D-erythritol 4-phosphate (MEP). This Chlamydia trachomatis serovar A (strain ATCC VR-571B / DSM 19440 / HAR-13) protein is 1-deoxy-D-xylulose 5-phosphate reductoisomerase.